Reading from the N-terminus, the 318-residue chain is uncharacterized protein (318 aa).

This is an uncharacterized protein from Ostreid herpesvirus 1 (isolate France) (OsHV-1).